The primary structure comprises 504 residues: D-alanine--D-alanyl carrier protein ligase (504 aa).

152–153 (TS) is a binding site for ATP. D-alanine is bound at residue Asp-197. An ATP-binding site is contributed by 292–297 (NTYGPT). Val-301 lines the D-alanine pocket. ATP is bound by residues Asp-383, 394-397 (YNGR), and Lys-492. Lys-492 contributes to the D-alanine binding site.

Belongs to the ATP-dependent AMP-binding enzyme family. DltA subfamily.

Its subcellular location is the cytoplasm. It carries out the reaction holo-[D-alanyl-carrier protein] + D-alanine + ATP = D-alanyl-[D-alanyl-carrier protein] + AMP + diphosphate. Its pathway is cell wall biogenesis; lipoteichoic acid biosynthesis. Its function is as follows. Catalyzes the first step in the D-alanylation of lipoteichoic acid (LTA), the activation of D-alanine and its transfer onto the D-alanyl carrier protein (Dcp) DltC. In an ATP-dependent two-step reaction, forms a high energy D-alanyl-AMP intermediate, followed by transfer of the D-alanyl residue as a thiol ester to the phosphopantheinyl prosthetic group of the Dcp. D-alanylation of LTA plays an important role in modulating the properties of the cell wall in Gram-positive bacteria, influencing the net charge of the cell wall. The chain is D-alanine--D-alanyl carrier protein ligase from Bacillus cereus (strain B4264).